The sequence spans 140 residues: Ribosome-binding factor A (140 aa).

Belongs to the RbfA family. As to quaternary structure, monomer. Binds 30S ribosomal subunits, but not 50S ribosomal subunits or 70S ribosomes.

It is found in the cytoplasm. In terms of biological role, one of several proteins that assist in the late maturation steps of the functional core of the 30S ribosomal subunit. Associates with free 30S ribosomal subunits (but not with 30S subunits that are part of 70S ribosomes or polysomes). Required for efficient processing of 16S rRNA. May interact with the 5'-terminal helix region of 16S rRNA. This chain is Ribosome-binding factor A, found in Cereibacter sphaeroides (strain ATCC 17023 / DSM 158 / JCM 6121 / CCUG 31486 / LMG 2827 / NBRC 12203 / NCIMB 8253 / ATH 2.4.1.) (Rhodobacter sphaeroides).